We begin with the raw amino-acid sequence, 237 residues long: 2-C-methyl-D-erythritol 4-phosphate cytidylyltransferase (237 aa).

It belongs to the IspD/TarI cytidylyltransferase family. IspD subfamily.

It carries out the reaction 2-C-methyl-D-erythritol 4-phosphate + CTP + H(+) = 4-CDP-2-C-methyl-D-erythritol + diphosphate. The protein operates within isoprenoid biosynthesis; isopentenyl diphosphate biosynthesis via DXP pathway; isopentenyl diphosphate from 1-deoxy-D-xylulose 5-phosphate: step 2/6. In terms of biological role, catalyzes the formation of 4-diphosphocytidyl-2-C-methyl-D-erythritol from CTP and 2-C-methyl-D-erythritol 4-phosphate (MEP). The chain is 2-C-methyl-D-erythritol 4-phosphate cytidylyltransferase from Acidithiobacillus ferrooxidans (strain ATCC 23270 / DSM 14882 / CIP 104768 / NCIMB 8455) (Ferrobacillus ferrooxidans (strain ATCC 23270)).